Consider the following 100-residue polypeptide: Cytochrome c2 iso-1 (100 aa).

Residues C11, C14, H15, and M76 each coordinate heme c.

It belongs to the cytochrome c family. Post-translationally, binds 1 heme c group covalently per subunit.

Cytochrome c2 is found mainly in purple, non-sulfur, photosynthetic bacteria where it functions as the electron donor to the oxidized bacteriochlorophyll in the photophosphorylation pathway. However, it may also have a role in the respiratory chain and is found in some non-photosynthetic bacteria. This is Cytochrome c2 iso-1 from Magnetospirillum molischianum (Rhodospirillum molischianum).